We begin with the raw amino-acid sequence, 341 residues long: Mitochondrial protein C2orf69 homolog (341 aa).

Residues 1–35 (MLQVVQSPHNLVFMGSIRSVVACLSLAAVARKMTA) constitute a mitochondrion transit peptide.

Belongs to the C2orf69 family.

The protein localises to the mitochondrion matrix. In terms of biological role, may play a role in the respiratory chain. In Danio rerio (Zebrafish), this protein is Mitochondrial protein C2orf69 homolog.